The chain runs to 107 residues: Putidaredoxin (107 aa).

Positions S2–Q106 constitute a 2Fe-2S ferredoxin-type domain. 4 residues coordinate [2Fe-2S] cluster: C40, C46, C49, and C87.

It belongs to the adrenodoxin/putidaredoxin family. In terms of assembly, monomer. [2Fe-2S] cluster is required as a cofactor.

Its function is as follows. The oxidation of camphor by cytochrome P450-CAM requires the participation of a flavoprotein, putidaredoxin reductase, and an iron-sulfur protein, putidaredoxin, to mediate the transfer of electrons from NADH to P450 for oxygen activation. The chain is Putidaredoxin (camB) from Pseudomonas putida (Arthrobacter siderocapsulatus).